Reading from the N-terminus, the 418-residue chain is Arginine deiminase (418 aa).

The Amidino-cysteine intermediate role is filled by Cys406.

The protein belongs to the arginine deiminase family.

Its subcellular location is the cytoplasm. The catalysed reaction is L-arginine + H2O = L-citrulline + NH4(+). Its pathway is amino-acid degradation; L-arginine degradation via ADI pathway; carbamoyl phosphate from L-arginine: step 1/2. This chain is Arginine deiminase, found in Lentilactobacillus hilgardii (Lactobacillus hilgardii).